Reading from the N-terminus, the 271-residue chain is tRNA pseudouridine synthase A (271 aa).

Aspartate 51 (nucleophile) is an active-site residue. Position 109 (tyrosine 109) interacts with substrate.

Belongs to the tRNA pseudouridine synthase TruA family. As to quaternary structure, homodimer.

It carries out the reaction uridine(38/39/40) in tRNA = pseudouridine(38/39/40) in tRNA. Formation of pseudouridine at positions 38, 39 and 40 in the anticodon stem and loop of transfer RNAs. The sequence is that of tRNA pseudouridine synthase A from Methylococcus capsulatus (strain ATCC 33009 / NCIMB 11132 / Bath).